A 393-amino-acid chain; its full sequence is MQTIAAIAKLEEILTNNGISAQQALALLTTALPLATTSDPQEPLPPLLRALQTASDRLRQQQVGDTVTYVINRNINFTNICEQHCAFCAFRRDATASDAYWLNIETILSKVAEAVAQGATEICMQGGLNPAAKEGGSSLRYYQFLVREIKTAFPQIHLHAFSPQEIQFIAREDGCSYAQVIAALHEVGVDSMPGTAAEVLVDAVRSKICPEKIRTATWLEIVETAHRLGVWTTSTMLCGHIETPADQMAHLQHLQQLQQKALEHDYPARITEFILLPYVGELAPKAMRQWVGHHQPRLLPTLVLTAVARLFLGQWIVNHQPSWVKLGLRGATMALNWGCNDLGGTLMEEHITSVAGAQGGTGVSPEDLVAAIHSLGRTPQQRTTLYNPVGERQ.

A Radical SAM core domain is found at Val-67 to Ser-322. The [4Fe-4S] cluster site is built by Cys-81, Cys-85, and Cys-88.

Belongs to the radical SAM superfamily. CofH family. In terms of assembly, consists of two subunits, CofG and CofH. Requires [4Fe-4S] cluster as cofactor.

It carries out the reaction 5-amino-6-(D-ribitylamino)uracil + L-tyrosine + S-adenosyl-L-methionine = 5-amino-5-(4-hydroxybenzyl)-6-(D-ribitylimino)-5,6-dihydrouracil + 2-iminoacetate + 5'-deoxyadenosine + L-methionine + H(+). It participates in cofactor biosynthesis; coenzyme F0 biosynthesis. In terms of biological role, catalyzes the radical-mediated synthesis of 5-amino-5-(4-hydroxybenzyl)-6-(D-ribitylimino)-5,6-dihydrouracil from 5-amino-6-(D-ribitylamino)uracil and L-tyrosine. In Thermosynechococcus vestitus (strain NIES-2133 / IAM M-273 / BP-1), this protein is 5-amino-6-(D-ribitylamino)uracil--L-tyrosine 4-hydroxyphenyl transferase.